The chain runs to 652 residues: MFEIKHRDAMGRIGKLKINGKIIETPTIMPVVHPNPKKQTVSIEKIEKLASVIITNSYIINTNPELKKIAEEKGIHNLIGFDKVIVTDSGSFQLSVYGEITVEPEEIIEFQEKIGVDVGTILDIPTAPYVQREQAEEELKETLRRAELSVKLRDEKNYKLLLNGTIQGSTYMDLRQESAKKMKELDFDIYPIGAVVPLMENYDYAQVIEIILNSKKELPTNKPVHLFGCGHPMMFALSVALGCDLFDSAAYALYAKDGRYLTESGTLHLEDLKDLEKFPCSCPVCIEYTPKELAKMEKRKRTELLAEHNLYITFEEINRIKQAIKDGNLWELVEERCRAHPKLLEAYRKALEYNEFIEEFDPITKKSAFFYGGYESLYRPEIIRHKKRLERIKSDNIYITTISNDINRPYSENTNMMDSDALVLIKDDLFGLVPLSIDTVYPLSQCDNPKLYCYEKIHNNEFVEEFKQNNKDKIMDITSYNYYINHYTSNANKNKVGSDAIRINNMIQYQYGFKLNDEELKKLIIKRSKKTNRIRNVLIPTDGNNKEVLFTLRSNDNLLIPAKEGAKLIHEKLPFPKYRVVIDSEVEEFARDGKSVFSKFVINCDKELRPYEEVIIVNENDELLAYGTTLLNGKELGEFNYGAAVSVRSGFK.

Asp-88 (nucleophile) is an active-site residue. Asp-123 and Ala-194 together coordinate substrate. The Zn(2+) site is built by Cys-280, Cys-282, and Cys-285. Residues 577–652 (KYRVVIDSEV…AAVSVRSGFK (76 aa)) form the PUA domain.

Belongs to the archaeosine tRNA-ribosyltransferase family. It depends on Zn(2+) as a cofactor.

It carries out the reaction guanosine(15) in tRNA + 7-cyano-7-deazaguanine = 7-cyano-7-carbaguanosine(15) in tRNA + guanine. The protein operates within tRNA modification; archaeosine-tRNA biosynthesis. In terms of biological role, exchanges the guanine residue with 7-cyano-7-deazaguanine (preQ0) at position 15 in the dihydrouridine loop (D-loop) of archaeal tRNAs. The chain is tRNA-guanine(15) transglycosylase from Methanococcus aeolicus (strain ATCC BAA-1280 / DSM 17508 / OCM 812 / Nankai-3).